The following is a 224-amino-acid chain: Glutathione peroxidase 3 (224 aa).

A signal peptide spans M1–G18. N38 carries N-linked (GlcNAc...) asparagine glycosylation. The active site involves C73.

This sequence belongs to the glutathione peroxidase family.

It localises to the secreted. Its subcellular location is the extracellular space. The enzyme catalyses 2 glutathione + H2O2 = glutathione disulfide + 2 H2O. The chain is Glutathione peroxidase 3 (gpx-3) from Caenorhabditis elegans.